Here is a 313-residue protein sequence, read N- to C-terminus: Pre-mRNA-splicing factor 38A (313 aa).

Residues 1–179 are N-terminal protein interaction domain; that stretch reads MANRTVKDAN…VLEEAELLDP (179 aa). A coiled-coil region spans residues 172–201; it reads EEAELLDPRISALEEDLDEVETSEEEDDED. The interval 182-313 is disordered; that stretch reads SALEEDLDEV…SHKRSRRGNE (132 aa). Residues 184–202 show a composition bias toward acidic residues; the sequence is LEEDLDEVETSEEEDDEDE. Positions 203 to 224 are enriched in basic and acidic residues; sequence KPERMQSPEPHRRSYRDMDRPR. Basic residues-rich tracts occupy residues 225-250, 260-294, and 302-313; these read RSPS…RSPS, HRSK…RSHS, and KKSHKRSRRGNE.

This sequence belongs to the PRP38 family. As to quaternary structure, component of the spliceosome B complex.

The protein localises to the nucleus. In terms of biological role, involved in pre-mRNA splicing as a component of the spliceosome. The protein is Pre-mRNA-splicing factor 38A (prpf38a) of Danio rerio (Zebrafish).